The following is a 794-amino-acid chain: Elongator complex protein 2 (794 aa).

13 WD repeats span residues 55 to 93, 98 to 140, 147 to 188, 203 to 244, 286 to 328, 337 to 376, 384 to 423, 433 to 472, 557 to 601, 604 to 643, 654 to 693, 705 to 751, and 759 to 794; these read EHTK…TTKS, GHTS…YVCF, DGFC…AGEG, GHED…KEQM, GHEG…IWLE, GNSV…PQLW, GHYG…GANP, IHGY…ENFR, GHGY…QIQK, GHQL…VSYQ, VHTR…KESS, LKNE…WKLL, and AHHL…IKLT.

The protein belongs to the WD repeat ELP2 family. In terms of assembly, component of the elongator complex composed of Elp1, Elp2, Elp3, Elp4, Elp5 and Elp6. The elongator complex associates with and stabilizes microtubules; efficient interaction requires the full complex.

The protein localises to the cytoplasm. It localises to the nucleus. The protein resides in the cytoskeleton. It is found in the spindle. It participates in tRNA modification; 5-methoxycarbonylmethyl-2-thiouridine-tRNA biosynthesis. Component of the elongator complex, which is required for multiple tRNA modifications, including mcm5U (5-methoxycarbonylmethyl uridine), mcm5s2U (5-methoxycarbonylmethyl-2-thiouridine), and ncm5U (5-carbamoylmethyl uridine). The elongator complex catalyzes the formation of carboxymethyluridine in the wobble base at position 34 in tRNAs. Binding by the elongator complex stabilizes microtubules and promotes their growth. This induces central spindle asymmetry, promoting polarized signaling endosome trafficking during asymmetric cell division and cell fate assignation of sensory organ precursor cells. Involved in the regulation of the STAT pathway. The chain is Elongator complex protein 2 from Drosophila melanogaster (Fruit fly).